Here is a 316-residue protein sequence, read N- to C-terminus: HTH-type transcriptional regulator cbl (316 aa).

The region spanning 1–59 is the HTH lysR-type domain; the sequence is MNFQQLKIIREAARQDYNLTEVANMLFTSQSGVSRHIRELEDELGIEIFVRRGKRLLGM. Positions 19-38 form a DNA-binding region, H-T-H motif; sequence LTEVANMLFTSQSGVSRHIR.

This sequence belongs to the LysR transcriptional regulatory family.

Its function is as follows. May be an accessory regulatory protein within the cys regulon. The sequence is that of HTH-type transcriptional regulator cbl (cbl) from Escherichia coli (strain K12).